We begin with the raw amino-acid sequence, 409 residues long: Failed axon connections homolog (409 aa).

A helical membrane pass occupies residues 68 to 88; that stretch reads YLTGGALLAAAAYLLHELLVI. The interval 372-409 is disordered; that stretch reads DEGAENSFSRTPDTDFTGHSLFDSDVDMDDYTDHEQCK.

It belongs to the FAX family.

It is found in the membrane. Functionally, may play a role in axonal development. The sequence is that of Failed axon connections homolog (FAXC) from Homo sapiens (Human).